The chain runs to 308 residues: Phenylcoumaran benzylic ether reductase TP7 (308 aa).

Residues 11–17 (GGTGYIG), Arg36, and Lys45 each bind NADP(+). The Proton acceptor role is filled by Lys133. Arg137 contributes to the NADP(+) binding site.

The protein belongs to the NmrA-type oxidoreductase family. Isoflavone reductase subfamily. In terms of tissue distribution, expressed in flowers. Expressed at low levels in stems.

The enzyme catalyses (-)-dehydrodiconiferyl alcohol + NADPH + H(+) = (S)-isodihydrodehydrodiconiferyl alcohol + NADP(+). It catalyses the reaction (+)-dehydrodiconiferyl alcohol + NADPH + H(+) = (R)-isodihydrodehydrodiconiferyl alcohol + NADP(+). The catalysed reaction is (2R,3S)-dihydrodehydrodiconiferyl alcohol + NADPH + H(+) = (S)-tetrahydrodehydrodiconiferyl alcohol + NADP(+). It carries out the reaction (2S,3R)-dihydrodehydrodiconiferyl alcohol + NADPH + H(+) = (R)-tetrahydrodehydrodiconiferyl alcohol + NADP(+). In terms of biological role, oxidoreductase involved in lignan biosynthesis. Catalyzes the NADPH-dependent reduction of phenylcoumaran benzylic ethers. Converts dehydrodiconiferyl alcohol (DDC) to isodihydrodehydrodiconiferyl alcohol (IDDDC), and dihydrodehydrodiconiferyl alcohol (DDDC) to tetrahydrodehydrodiconiferyl alcohol (TDDC). This is Phenylcoumaran benzylic ether reductase TP7 from Nicotiana tabacum (Common tobacco).